The following is a 252-amino-acid chain: Probable transcriptional regulatory protein all4276 (252 aa).

This sequence belongs to the TACO1 family.

It localises to the cytoplasm. In Nostoc sp. (strain PCC 7120 / SAG 25.82 / UTEX 2576), this protein is Probable transcriptional regulatory protein all4276.